The sequence spans 86 residues: Cytochrome c oxidase subunit 6B1 (86 aa).

Alanine 2 is modified (N-acetylalanine). Residues 27–73 (TRNCWQNYLDFHRCQKAMTAKGGDISVCEWYQRVYQSLCPTSWVTDW) form the CHCH domain. The Cx9C motif signature appears at 30-40 (CWQNYLDFHRC). Cystine bridges form between cysteine 30–cysteine 65 and cysteine 40–cysteine 54. The Cx10C motif motif lies at 54–65 (CEWYQRVYQSLC).

The protein belongs to the cytochrome c oxidase subunit 6B family. Component of the cytochrome c oxidase (complex IV, CIV), a multisubunit enzyme composed of 14 subunits. The complex is composed of a catalytic core of 3 subunits MT-CO1, MT-CO2 and MT-CO3, encoded in the mitochondrial DNA, and 11 supernumerary subunits COX4I, COX5A, COX5B, COX6A, COX6B, COX6C, COX7A, COX7B, COX7C, COX8 and NDUFA4, which are encoded in the nuclear genome. The complex exists as a monomer or a dimer and forms supercomplexes (SCs) in the inner mitochondrial membrane with NADH-ubiquinone oxidoreductase (complex I, CI) and ubiquinol-cytochrome c oxidoreductase (cytochrome b-c1 complex, complex III, CIII), resulting in different assemblies (supercomplex SCI(1)III(2)IV(1) and megacomplex MCI(2)III(2)IV(2)).

It localises to the mitochondrion inner membrane. It participates in energy metabolism; oxidative phosphorylation. Functionally, component of the cytochrome c oxidase, the last enzyme in the mitochondrial electron transport chain which drives oxidative phosphorylation. The respiratory chain contains 3 multisubunit complexes succinate dehydrogenase (complex II, CII), ubiquinol-cytochrome c oxidoreductase (cytochrome b-c1 complex, complex III, CIII) and cytochrome c oxidase (complex IV, CIV), that cooperate to transfer electrons derived from NADH and succinate to molecular oxygen, creating an electrochemical gradient over the inner membrane that drives transmembrane transport and the ATP synthase. Cytochrome c oxidase is the component of the respiratory chain that catalyzes the reduction of oxygen to water. Electrons originating from reduced cytochrome c in the intermembrane space (IMS) are transferred via the dinuclear copper A center (CU(A)) of subunit 2 and heme A of subunit 1 to the active site in subunit 1, a binuclear center (BNC) formed by heme A3 and copper B (CU(B)). The BNC reduces molecular oxygen to 2 water molecules using 4 electrons from cytochrome c in the IMS and 4 protons from the mitochondrial matrix. This Pongo abelii (Sumatran orangutan) protein is Cytochrome c oxidase subunit 6B1 (COX6B1).